A 284-amino-acid chain; its full sequence is MAVDIECRYSCMAPSLRRERFAFQIAPKPSKPLRPCIQLSGKNEASGTVAPTVQEKKVKKRVSFADNQGLALTMVKVFSEFDDPLDIPLNITELLDSIVSLTTAESESFVLDFSQPSADYLDFRNRLQTDHVCLENCVLKDRSIAGTVKVQNLAFEKTVKVRMTFDTWKSFTDFPCWYVKDTYAGSDKDTFSFDISLPEKIQSYERMEFAVCYECNGQTYWDSNKGKNYRIIRAELQSTQGTAQPPNGPDFEIAFDQFGSPRCSYGLFPEWPSYLGYEKLGPYY.

Residues 61-64 (RVSF) carry the PP1-binding motif motif. Residues 124–232 (RNRLQTDHVC…SNKGKNYRII (109 aa)) form the CBM21 domain. Phosphoserine is present on Ser260.

As to quaternary structure, interacts with glycogen, PPP1CC catalytic subunit of PP1 and PYGL. Associates with glycogen particles. Forms complexes with debranching enzyme, glycogen phosphorylase, glycogen synthase and phosphorylase kinase which is necessary for its regulation of PP1 activity.

Functionally, acts as a glycogen-targeting subunit for phosphatase PP1. Facilitates interaction of the PP1 with enzymes of the glycogen metabolism and regulates its activity. Suppresses the rate at which PP1 dephosphorylates (inactivates) glycogen phosphorylase and enhances the rate at which it activates glycogen synthase and therefore limits glycogen breakdown. Its activity is inhibited by PYGL, resulting in inhibition of the glycogen synthase and glycogen phosphorylase phosphatase activities of PP1. Dramatically increases basal and insulin-stimulated glycogen synthesis upon overexpression in hepatocytes. This Bos taurus (Bovine) protein is Protein phosphatase 1 regulatory subunit 3B (PPP1R3B).